The primary structure comprises 429 residues: Bifunctional protein GlmU (429 aa).

A pyrophosphorylase region spans residues 1 to 223 (MKISVLILAA…EQDFMGVNDK (223 aa)). UDP-N-acetyl-alpha-D-glucosamine contacts are provided by residues 8 to 11 (LAAG), lysine 22, glutamine 74, and 81 to 82 (GT). Aspartate 102 provides a ligand contact to Mg(2+). UDP-N-acetyl-alpha-D-glucosamine is bound by residues glycine 135, glutamate 149, asparagine 164, and asparagine 221. Asparagine 221 provides a ligand contact to Mg(2+). The linker stretch occupies residues 224-244 (IELCLAQDLMQEAIKKEWMKQ). The segment at 245-429 (GVIFHMPATT…KDYFYTKFKK (185 aa)) is N-acetyltransferase. Arginine 308 and lysine 325 together coordinate UDP-N-acetyl-alpha-D-glucosamine. The Proton acceptor role is filled by histidine 336. 2 residues coordinate UDP-N-acetyl-alpha-D-glucosamine: tyrosine 339 and asparagine 350. Acetyl-CoA contacts are provided by residues 359 to 360 (NY), serine 378, alanine 396, and arginine 413.

This sequence in the N-terminal section; belongs to the N-acetylglucosamine-1-phosphate uridyltransferase family. The protein in the C-terminal section; belongs to the transferase hexapeptide repeat family. As to quaternary structure, homotrimer. The cofactor is Mg(2+).

It is found in the cytoplasm. The catalysed reaction is alpha-D-glucosamine 1-phosphate + acetyl-CoA = N-acetyl-alpha-D-glucosamine 1-phosphate + CoA + H(+). It carries out the reaction N-acetyl-alpha-D-glucosamine 1-phosphate + UTP + H(+) = UDP-N-acetyl-alpha-D-glucosamine + diphosphate. The protein operates within nucleotide-sugar biosynthesis; UDP-N-acetyl-alpha-D-glucosamine biosynthesis; N-acetyl-alpha-D-glucosamine 1-phosphate from alpha-D-glucosamine 6-phosphate (route II): step 2/2. It participates in nucleotide-sugar biosynthesis; UDP-N-acetyl-alpha-D-glucosamine biosynthesis; UDP-N-acetyl-alpha-D-glucosamine from N-acetyl-alpha-D-glucosamine 1-phosphate: step 1/1. Its pathway is bacterial outer membrane biogenesis; LPS lipid A biosynthesis. In terms of biological role, catalyzes the last two sequential reactions in the de novo biosynthetic pathway for UDP-N-acetylglucosamine (UDP-GlcNAc). The C-terminal domain catalyzes the transfer of acetyl group from acetyl coenzyme A to glucosamine-1-phosphate (GlcN-1-P) to produce N-acetylglucosamine-1-phosphate (GlcNAc-1-P), which is converted into UDP-GlcNAc by the transfer of uridine 5-monophosphate (from uridine 5-triphosphate), a reaction catalyzed by the N-terminal domain. This Campylobacter lari (strain RM2100 / D67 / ATCC BAA-1060) protein is Bifunctional protein GlmU.